The following is a 178-amino-acid chain: Ribosome maturation factor RimM (178 aa).

Residues 93–170 enclose the PRC barrel domain; sequence EGSYYYHELR…ALTADAPAGL (78 aa).

Belongs to the RimM family. Binds ribosomal protein uS19.

The protein resides in the cytoplasm. An accessory protein needed during the final step in the assembly of 30S ribosomal subunit, possibly for assembly of the head region. Essential for efficient processing of 16S rRNA. May be needed both before and after RbfA during the maturation of 16S rRNA. It has affinity for free ribosomal 30S subunits but not for 70S ribosomes. This chain is Ribosome maturation factor RimM, found in Deinococcus geothermalis (strain DSM 11300 / CIP 105573 / AG-3a).